The sequence spans 959 residues: Lon protease homolog, mitochondrial (959 aa).

Residues 1 to 67 (MAASTGYVRL…GPAIGGQWRG (67 aa)) constitute a mitochondrion transit peptide. Disordered stretches follow at residues 77–102 (GAFSGGEDASEGGAEEGAGGAGGSAG) and 218–257 (RQLEVEPEEPEAENKHKPRRKSKRGKKEAEDELSARHPAE). Over residues 91-102 (EEGAGGAGGSAG) the composition is skewed to gly residues. The Lon N-terminal domain occupies 124 to 370 (LPLIAITRNP…KALSLLKKEF (247 aa)). A compositionally biased stretch (basic residues) spans 233 to 243 (HKPRRKSKRGK). Residues 244 to 256 (KEAEDELSARHPA) are compositionally biased toward basic and acidic residues. 523–530 (GPPGVGKT) lines the ATP pocket. The region spanning 759–949 (VTPPGVVMGL…REIFDIAFPD (191 aa)) is the Lon proteolytic domain. Residues S855 and K898 contribute to the active site.

The protein belongs to the peptidase S16 family. As to quaternary structure, homohexamer. Organized in a ring with a central cavity. The ATP-binding and proteolytic domains (AP-domain) form a hexameric chamber, while the N-terminal domain is arranged as a trimer of dimers. DNA and RNA binding is stimulated by substrate and inhibited by ATP binding. Interacts with TWNK and mitochondrial DNA polymerase subunit POLG. Duodenum, heart, lung and liver, but not thymus.

It is found in the mitochondrion matrix. It catalyses the reaction Hydrolysis of proteins in presence of ATP.. Peptidase activity is subject to substrate inhibition by ATP. Its function is as follows. ATP-dependent serine protease that mediates the selective degradation of misfolded, unassembled or oxidatively damaged polypeptides as well as certain short-lived regulatory proteins in the mitochondrial matrix. Endogenous substrates include mitochondrial steroidogenic acute regulatory (StAR) protein, DELE1, helicase Twinkle (TWNK) and the large ribosomal subunit protein MRPL32/bL32m. MRPL32/bL32m is protected from degradation by LONP1 when it is bound to a nucleic acid (RNA), but TWNK is not. May also have a chaperone function in the assembly of inner membrane protein complexes. Participates in the regulation of mitochondrial gene expression and in the maintenance of the integrity of the mitochondrial genome. Binds to mitochondrial promoters and RNA in a single-stranded, site-specific, and strand-specific manner. May regulate mitochondrial DNA replication and/or gene expression using site-specific, single-stranded DNA binding to target the degradation of regulatory proteins binding to adjacent sites in mitochondrial promoters. This is Lon protease homolog, mitochondrial from Homo sapiens (Human).